Reading from the N-terminus, the 305-residue chain is tRNA dimethylallyltransferase (305 aa).

Residue 9–16 participates in ATP binding; that stretch reads GPTASGKS. 11 to 16 is a binding site for substrate; it reads TASGKS. Residues 34-37 form an interaction with substrate tRNA region; the sequence is DSKQ.

This sequence belongs to the IPP transferase family. As to quaternary structure, monomer. The cofactor is Mg(2+).

It catalyses the reaction adenosine(37) in tRNA + dimethylallyl diphosphate = N(6)-dimethylallyladenosine(37) in tRNA + diphosphate. Catalyzes the transfer of a dimethylallyl group onto the adenine at position 37 in tRNAs that read codons beginning with uridine, leading to the formation of N6-(dimethylallyl)adenosine (i(6)A). This is tRNA dimethylallyltransferase from Anaplasma marginale (strain Florida).